A 265-amino-acid polypeptide reads, in one-letter code: Shikimate dehydrogenase (NADP(+)) (265 aa).

Residues 15–17 and Thr62 each bind shikimate; that span reads SKS. Lys66 functions as the Proton acceptor in the catalytic mechanism. Positions 87 and 102 each coordinate shikimate. NADP(+) contacts are provided by residues 127–131, 151–156, and Met212; these read GAGGA and NRTVSR. Tyr214 contributes to the shikimate binding site. Gly234 contributes to the NADP(+) binding site.

Belongs to the shikimate dehydrogenase family. As to quaternary structure, homodimer.

The enzyme catalyses shikimate + NADP(+) = 3-dehydroshikimate + NADPH + H(+). Its pathway is metabolic intermediate biosynthesis; chorismate biosynthesis; chorismate from D-erythrose 4-phosphate and phosphoenolpyruvate: step 4/7. In terms of biological role, involved in the biosynthesis of the chorismate, which leads to the biosynthesis of aromatic amino acids. Catalyzes the reversible NADPH linked reduction of 3-dehydroshikimate (DHSA) to yield shikimate (SA). The chain is Shikimate dehydrogenase (NADP(+)) from Thiobacillus denitrificans (strain ATCC 25259 / T1).